We begin with the raw amino-acid sequence, 202 residues long: Coiled-coil domain-containing protein mdt-28 (202 aa).

Acidic residues-rich tracts occupy residues 1-15 (MFEE…EEQE) and 28-45 (EDID…DDEY). Residues 1–83 (MFEELDAEDG…NEDDEEPIEP (83 aa)) form a disordered region. Positions 159–184 (IEEENLDEAIERQETIIAAAREMLNS) form a coiled coil.

In terms of assembly, interacts with mdt-6 and mdt-30. As to expression, ubiquitously expressed in tissues including epidermal, intestinal, pharyngeal and uterine, and is also expressed in vulval muscle cells and gut granules.

Its subcellular location is the nucleus. It is found in the cytoplasm. Its function is as follows. Plays a role in normal growth and development. The chain is Coiled-coil domain-containing protein mdt-28 from Caenorhabditis elegans.